Here is a 309-residue protein sequence, read N- to C-terminus: MRGYKIFTGSAHPEFGGEIAKYLGIPLSSATVNRFSDGEINIQISESVRGRDVFIVQPTCAPTNDNLMELLIMIDALKRSSASSINAVIPYFGYARQDRKAAPRVPITAKLVADLLQRAGATRVITMDLHAGQIQGFFDIPVDNLYGSIVFRDYVKSKHLPNPIIASPDIGGVARARYFADQLGLDLVIVDKKREKANVSEVMNIIGDVQGKDVILVDDMIDTAGTMAKAAEVLKSKGATSVIALGTHPVFSGSAYEKIEKGALDEMVVANTIPLKKESSKIKVLSVAPLFAEVIRRVYHNESVNSLFV.

ATP contacts are provided by residues 37 to 39 and 96 to 97; these read DGE and RQ. Mg(2+)-binding residues include H130 and D169. Residue K192 is part of the active site. D-ribose 5-phosphate is bound by residues R194, D218, and 222-226; that span reads DTAGT.

This sequence belongs to the ribose-phosphate pyrophosphokinase family. Class I subfamily. Homohexamer. Mg(2+) serves as cofactor.

Its subcellular location is the cytoplasm. The catalysed reaction is D-ribose 5-phosphate + ATP = 5-phospho-alpha-D-ribose 1-diphosphate + AMP + H(+). Its pathway is metabolic intermediate biosynthesis; 5-phospho-alpha-D-ribose 1-diphosphate biosynthesis; 5-phospho-alpha-D-ribose 1-diphosphate from D-ribose 5-phosphate (route I): step 1/1. Functionally, involved in the biosynthesis of the central metabolite phospho-alpha-D-ribosyl-1-pyrophosphate (PRPP) via the transfer of pyrophosphoryl group from ATP to 1-hydroxyl of ribose-5-phosphate (Rib-5-P). This is Ribose-phosphate pyrophosphokinase from Wolinella succinogenes (strain ATCC 29543 / DSM 1740 / CCUG 13145 / JCM 31913 / LMG 7466 / NCTC 11488 / FDC 602W) (Vibrio succinogenes).